The following is a 681-amino-acid chain: Minichromosome maintenance domain-containing protein 2 (681 aa).

Position 292 is a phosphoserine (Ser292). Residues 533–621 (RQFTTEDFEK…LIAALLFETS (89 aa)) enclose the MCM domain.

In terms of biological role, plays an important role in meiotic recombination and associated DNA double-strand break repair. The chain is Minichromosome maintenance domain-containing protein 2 (MCMDC2) from Homo sapiens (Human).